The chain runs to 873 residues: Serine/threonine-protein phosphatase 6 regulatory subunit 3 (873 aa).

Disordered stretches follow at residues 628–659, 693–715, 729–755, 767–787, and 840–873; these read IAFT…GTKQ, AHGT…MPAK, LSST…PLSA, PGSV…NADK, and AEEA…NGPV. The segment covering 644–655 has biased composition (acidic residues); it reads DSEESTDSEEED. A compositionally biased stretch (low complexity) spans 729-739; it reads LSSTDSLRSNS.

Belongs to the SAPS family. As to quaternary structure, protein phosphatase 6 (PP6) holoenzyme is proposed to be a heterotrimeric complex formed by the catalytic subunit, a SAPS domain-containing subunit (PP6R) and an ankyrin repeat-domain containing regulatory subunit (ARS).

In terms of biological role, regulatory subunit of protein phosphatase 6 (PP6). May function as a scaffolding PP6 subunit. The polypeptide is Serine/threonine-protein phosphatase 6 regulatory subunit 3 (PPP6R3) (Gallus gallus (Chicken)).